A 121-amino-acid polypeptide reads, in one-letter code: Small ribosomal subunit protein bS16 (121 aa).

The segment at 88-121 (GKAKLEKEKKAKAKTKEEENEGSKTESGSNEAES) is disordered. Residues 90–111 (AKLEKEKKAKAKTKEEENEGSK) are compositionally biased toward basic and acidic residues. A compositionally biased stretch (polar residues) spans 112–121 (TESGSNEAES).

It belongs to the bacterial ribosomal protein bS16 family.

In Prochlorococcus marinus (strain MIT 9215), this protein is Small ribosomal subunit protein bS16.